The chain runs to 78 residues: Acyl carrier protein (78 aa).

The Carrier domain maps to 2–77 (SDTVERVKKI…DAVKFIDKAS (76 aa)). Residue Ser-37 is modified to O-(pantetheine 4'-phosphoryl)serine.

The protein belongs to the acyl carrier protein (ACP) family. Post-translationally, 4'-phosphopantetheine is transferred from CoA to a specific serine of apo-ACP by AcpS. This modification is essential for activity because fatty acids are bound in thioester linkage to the sulfhydryl of the prosthetic group.

It localises to the cytoplasm. The protein operates within lipid metabolism; fatty acid biosynthesis. In terms of biological role, carrier of the growing fatty acid chain in fatty acid biosynthesis. The protein is Acyl carrier protein of Bartonella henselae (strain ATCC 49882 / DSM 28221 / CCUG 30454 / Houston 1) (Rochalimaea henselae).